Here is a 306-residue protein sequence, read N- to C-terminus: Aspartate carbamoyltransferase catalytic subunit (306 aa).

Residues Arg-55 and Thr-56 each contribute to the carbamoyl phosphate site. Residue Lys-84 participates in L-aspartate binding. Carbamoyl phosphate is bound by residues Arg-105, His-133, and Gln-136. L-aspartate contacts are provided by Arg-166 and Arg-227. The carbamoyl phosphate site is built by Leu-265 and Pro-266.

Belongs to the aspartate/ornithine carbamoyltransferase superfamily. ATCase family. Heterododecamer (2C3:3R2) of six catalytic PyrB chains organized as two trimers (C3), and six regulatory PyrI chains organized as three dimers (R2).

The catalysed reaction is carbamoyl phosphate + L-aspartate = N-carbamoyl-L-aspartate + phosphate + H(+). Its pathway is pyrimidine metabolism; UMP biosynthesis via de novo pathway; (S)-dihydroorotate from bicarbonate: step 2/3. Catalyzes the condensation of carbamoyl phosphate and aspartate to form carbamoyl aspartate and inorganic phosphate, the committed step in the de novo pyrimidine nucleotide biosynthesis pathway. The sequence is that of Aspartate carbamoyltransferase catalytic subunit from Neisseria gonorrhoeae (strain NCCP11945).